A 78-amino-acid polypeptide reads, in one-letter code: Small ribosomal subunit protein uS17 (78 aa).

Belongs to the universal ribosomal protein uS17 family. As to quaternary structure, part of the 30S ribosomal subunit.

Functionally, one of the primary rRNA binding proteins, it binds specifically to the 5'-end of 16S ribosomal RNA. The chain is Small ribosomal subunit protein uS17 from Pelagibacter ubique (strain HTCC1062).